Consider the following 344-residue polypeptide: UDP-galactose/UDP-glucose transporter 5B (344 aa).

The next 8 helical transmembrane spans lie at 16–36, 56–76, 115–135, 142–162, 176–196, 220–240, 246–266, and 292–312; these read LWKGVFAVSGIMSTLVIYGVL, LFLVFCNRLTTSAVSAGALLA, VQTLAKCAKMIPVMVWGTLIM, FDYLVAFLVTLGCSVFILFPA, TVWGVSLMAGYLGFDGFTSTF, CVLSFTGLILQGHLLPAVDFV, CLLDIALLSTVATASQFFISY, and CIWFSHPLSWEQCIGSVIVFG. The tract at residues 324-344 is disordered; the sequence is KNSQTQPPPPELPQYEKVESS.

Belongs to the nucleotide-sugar transporter family. UDP-galactose:UMP antiporter (TC 2.A.7.11) subfamily.

The protein resides in the membrane. In terms of biological role, sugar transporter involved in the transport of nucleotide-sugars from cytoplasm into the Golgi and/or the endoplasmic reticulum. This is UDP-galactose/UDP-glucose transporter 5B from Arabidopsis thaliana (Mouse-ear cress).